We begin with the raw amino-acid sequence, 778 residues long: uncharacterized protein (778 aa).

3 stretches are compositionally biased toward polar residues: residues 1–11 (MPISSPGTRCS), 18–34 (TLQQ…QSLG), and 41–51 (GSITENYVQDS). Residues 1-60 (MPISSPGTRCSSDLKDPTLQQYSAESVSTEQSLGTFEESKGSITENYVQDSSVDEHDDGN) form a disordered region. 2 consecutive transmembrane segments (helical) span residues 356–381 (YILM…APII) and 401–423 (GFLA…GAHI).

The protein belongs to the TMCO4 family.

It is found in the golgi apparatus membrane. This is an uncharacterized protein from Schizosaccharomyces pombe (strain 972 / ATCC 24843) (Fission yeast).